The chain runs to 513 residues: uncharacterized protein (513 aa).

Disordered regions lie at residues 72–113 (GVVP…TGQF) and 155–262 (IMGG…NPRF). Over residues 82–106 (ANRTANPNTNSNPNPNATNAQPNPT) the composition is skewed to low complexity. 2 stretches are compositionally biased toward polar residues: residues 164 to 189 (EANSEQARNANTETSNPPFASAQTQG) and 210 to 228 (TPLNQPPSYAASTQPEFQQ). Residues 229–238 (TTSPIFSSSS) show a composition bias toward low complexity. Residues 239 to 248 (TPPPPPPRPS) are compositionally biased toward pro residues. The segment covering 253-262 (GESQNTNPRF) has biased composition (polar residues). The RING-type; atypical zinc finger occupies 396–437 (CTICMEMFKINDDVIQLPCKHYFHENCIKPWLRVNGTCAICR). The disordered stretch occupies residues 439-513 (PVDPNSQQRN…DDFVDEEPLE (75 aa)). Positions 442 to 493 (PNSQQRNNTSTDSANGHNPSNHANPSTSTTNDQGATLRNESFNAASQSNLSS) are enriched in polar residues.

This is an uncharacterized protein from Schizosaccharomyces pombe (strain 972 / ATCC 24843) (Fission yeast).